The primary structure comprises 337 residues: Lipoate-protein ligase A (337 aa).

Positions 29-216 constitute a BPL/LPL catalytic domain; that stretch reads DQNQTILFLW…AFFNYYQTTV (188 aa). Residues R71, 76–79, and K134 contribute to the ATP site; that span reads GAVF. A (R)-lipoate-binding site is contributed by K134.

The protein belongs to the LplA family. In terms of assembly, monomer.

It localises to the cytoplasm. It carries out the reaction L-lysyl-[lipoyl-carrier protein] + (R)-lipoate + ATP = N(6)-[(R)-lipoyl]-L-lysyl-[lipoyl-carrier protein] + AMP + diphosphate + H(+). The protein operates within protein modification; protein lipoylation via exogenous pathway; protein N(6)-(lipoyl)lysine from lipoate: step 1/2. Its pathway is protein modification; protein lipoylation via exogenous pathway; protein N(6)-(lipoyl)lysine from lipoate: step 2/2. Its function is as follows. Catalyzes both the ATP-dependent activation of exogenously supplied lipoate to lipoyl-AMP and the transfer of the activated lipoyl onto the lipoyl domains of lipoate-dependent enzymes. In Blochmanniella floridana, this protein is Lipoate-protein ligase A.